The chain runs to 121 residues: Small ribosomal subunit protein uS13 (121 aa).

The interval 91 to 121 (HRMSLPVRGQRTRTNARTRRGSRKTVAGRKK) is disordered. Positions 100-121 (QRTRTNARTRRGSRKTVAGRKK) are enriched in basic residues.

This sequence belongs to the universal ribosomal protein uS13 family. Part of the 30S ribosomal subunit. Forms a loose heterodimer with protein S19. Forms two bridges to the 50S subunit in the 70S ribosome.

Located at the top of the head of the 30S subunit, it contacts several helices of the 16S rRNA. In the 70S ribosome it contacts the 23S rRNA (bridge B1a) and protein L5 of the 50S subunit (bridge B1b), connecting the 2 subunits; these bridges are implicated in subunit movement. Contacts the tRNAs in the A and P-sites. In Prochlorococcus marinus (strain MIT 9301), this protein is Small ribosomal subunit protein uS13.